The primary structure comprises 194 residues: Homing endonuclease I-DmoI (194 aa).

Positions Leu14 to Val147 constitute a DOD-type homing endonuclease domain. Catalysis depends on residues Asp21 and Glu117.

The cofactor is a divalent metal cation.

In terms of biological role, endonuclease involved in intron homing. Recognizes DNA in the 23S rRNA gene intron (minimally 5'-CCGGGTAAGTTCCGG-3'), cutting after A-8 on the top and C-11 on the bottom strand. Has a slow turnover rate, cuts the coding strand with a slight preference over the non-coding strand. In Desulfurococcus mucosus (Desulfurococcus mobilis), this protein is Homing endonuclease I-DmoI.